A 769-amino-acid polypeptide reads, in one-letter code: Polymeric immunoglobulin receptor (769 aa).

An N-terminal signal peptide occupies residues 1-18 (MRLSLFALLVTVFSGVST). Topologically, residues 19–643 (QSPIFGPQDV…SAGGQSGSSK (625 aa)) are extracellular. Positions 21–126 (PIFGPQDVSS…RGLFFDVSLE (106 aa)) constitute an Ig-like V-type 1; required for binding to polymeric IgA and IgM domain. C40 and C110 are disulfide-bonded. N-linked (GlcNAc...) asparagine glycans are attached at residues N90, N135, and N206. Ig-like V-type domains are found at residues 135–237 (NDTH…DLQV), 240–341 (PEPE…VQAW), 353–457 (NSRS…LQVA), and 463–563 (PDLE…IYVA). Cystine bridges form between C152/C220, C257/C324, and C370/C440. N-linked (GlcNAc...) asparagine glycosylation is present at N471. C484 and C546 are joined by a disulfide. Disordered stretches follow at residues 569–604 (RGSPHINPTDANARAKDAPEEEAMESSVREDENKAN) and 619–640 (AGDQAQENRASGNAGSAGGQSG). Residues 595–604 (SVREDENKAN) show a composition bias toward basic and acidic residues. The helical transmembrane segment at 644–666 (VLFSTLVPLGLVLAVGAVAVWVA) threads the bilayer. Over 667 to 769 (RVRHRKNVDR…AQVHDGPQEA (103 aa)) the chain is Cytoplasmic. Phosphoserine is present on residues S678, S687, S694, and S740. A disordered region spans residues 719–741 (EIETTTECTTEPEESKKAKRSSK). Residues 731–741 (EESKKAKRSSK) show a composition bias toward basic and acidic residues.

As to quaternary structure, interacts (mainly via CDR1-like domain) with dimeric IgA. Interacts (mainly via CDR2-like domain) with pentameric IgM. Either free or part of the secretory IgA (sIgA) complex that consists of two, four or five IgA monomers, and two additional non-Ig polypeptides, namely the JCHAIN and the secretory component (the proteolytic product of PIGR). Free secretory component interacts with bacterial antigens toxA of C.difficile and eae of E.coli. N-glycosylated. N-glycosylation is required for anchoring IgA molecules to mucus, but is not necessary for Ig binding.

The protein localises to the cell membrane. Its subcellular location is the secreted. Its function is as follows. Mediates selective transcytosis of polymeric IgA and IgM across mucosal epithelial cells. Binds polymeric IgA and IgM at the basolateral surface of epithelial cells. The complex is then transported across the cell to be secreted at the apical surface. During this process, a cleavage occurs that separates the extracellular (known as the secretory component) from the transmembrane segment. In terms of biological role, through its N-linked glycans ensures anchoring of secretory IgA (sIgA) molecules to mucus lining the epithelial surface to neutralize extracellular pathogens. On its own (free form) may act as a non-specific microbial scavenger to prevent pathogen interaction with epithelial cells. This chain is Polymeric immunoglobulin receptor (Pigr), found in Rattus norvegicus (Rat).